We begin with the raw amino-acid sequence, 128 residues long: Aspartate 1-decarboxylase (128 aa).

Ser25 acts as the Schiff-base intermediate with substrate; via pyruvic acid in catalysis. A Pyruvic acid (Ser) modification is found at Ser25. Substrate is bound at residue Thr57. Catalysis depends on Tyr58, which acts as the Proton donor. 73–75 (GSA) serves as a coordination point for substrate.

Belongs to the PanD family. As to quaternary structure, heterooctamer of four alpha and four beta subunits. It depends on pyruvate as a cofactor. Post-translationally, is synthesized initially as an inactive proenzyme, which is activated by self-cleavage at a specific serine bond to produce a beta-subunit with a hydroxyl group at its C-terminus and an alpha-subunit with a pyruvoyl group at its N-terminus.

It localises to the cytoplasm. It catalyses the reaction L-aspartate + H(+) = beta-alanine + CO2. It participates in cofactor biosynthesis; (R)-pantothenate biosynthesis; beta-alanine from L-aspartate: step 1/1. In terms of biological role, catalyzes the pyruvoyl-dependent decarboxylation of aspartate to produce beta-alanine. The protein is Aspartate 1-decarboxylase of Burkholderia mallei (strain NCTC 10247).